Here is a 460-residue protein sequence, read N- to C-terminus: MFRIVAVPEFSIQTVDARDPSSSEAAETLAALREKLSPRGDLVSPRGRELTLKVFGKALSPIEVVETICKDVQSQGTEALLRYTKSLDGAELTADTLRVPEEDLKAAHAVADPKLIETIGRIRDNIATFQSAILHRDVTITPRPGVSLTQRYVPIPRVGICVPGGAAAYPSTVMMTAIPAQVAGVDEIAVVAPPTPFGAYNTDMLATCHELGIKEVYRCGGAQAVAAMAYGCDALPAVDKIVGPGNLFVALAKKHVFGTVDIDSFAGPSEVIVIADESANAAFVASDLLAQAEHSPGSAILITWDESLLTSVQAELSRQLGELERGDLARDALSDFGALVLARDADHACELTDSFAPEHLQIETREPESLIAKIRHSGAAFLGHHTPVALGDYAAGPSHVLPTGGTCRWAAGLSANSFLRSGSVTQFDQSALSAIAQDVITVAEKEGLTAHARSISIRTE.

Residues serine 269, glutamine 291, and histidine 294 each coordinate substrate. Residues glutamine 291 and histidine 294 each contribute to the Zn(2+) site. Active-site proton acceptor residues include glutamate 358 and histidine 359. 4 residues coordinate substrate: histidine 359, aspartate 392, glutamate 446, and histidine 451. Position 392 (aspartate 392) interacts with Zn(2+). A Zn(2+)-binding site is contributed by histidine 451.

Belongs to the histidinol dehydrogenase family. Zn(2+) is required as a cofactor.

The enzyme catalyses L-histidinol + 2 NAD(+) + H2O = L-histidine + 2 NADH + 3 H(+). The protein operates within amino-acid biosynthesis; L-histidine biosynthesis; L-histidine from 5-phospho-alpha-D-ribose 1-diphosphate: step 9/9. Functionally, catalyzes the sequential NAD-dependent oxidations of L-histidinol to L-histidinaldehyde and then to L-histidine. This chain is Histidinol dehydrogenase, found in Rhodopirellula baltica (strain DSM 10527 / NCIMB 13988 / SH1).